We begin with the raw amino-acid sequence, 341 residues long: Fructose-1,6-bisphosphatase, cytosolic (341 aa).

Positions 100, 121, 123, and 124 each coordinate Mg(2+). Substrate contacts are provided by residues 124 to 127, asparagine 215, tyrosine 247, tyrosine 267, and lysine 277; that span reads DGSS. Glutamate 283 lines the Mg(2+) pocket.

Belongs to the FBPase class 1 family. Requires Mg(2+) as cofactor.

Its subcellular location is the cytoplasm. The catalysed reaction is beta-D-fructose 1,6-bisphosphate + H2O = beta-D-fructose 6-phosphate + phosphate. In Musa acuminata (Banana), this protein is Fructose-1,6-bisphosphatase, cytosolic (FBPban1).